The primary structure comprises 187 residues: UPF0301 protein Noc_0368 (187 aa).

The protein belongs to the UPF0301 (AlgH) family.

This Nitrosococcus oceani (strain ATCC 19707 / BCRC 17464 / JCM 30415 / NCIMB 11848 / C-107) protein is UPF0301 protein Noc_0368.